The chain runs to 85 residues: UPF0386 protein TM1040_0419 (85 aa).

Residues 62–85 are disordered; sequence SKSSRPYQISEKGRRSVRAQLDNR.

This sequence belongs to the UPF0386 family.

This Ruegeria sp. (strain TM1040) (Silicibacter sp.) protein is UPF0386 protein TM1040_0419.